Reading from the N-terminus, the 229-residue chain is Potassium/proton antiporter CemA (229 aa).

Helical transmembrane passes span 7 to 27 (FTPL…SFSF), 114 to 134 (LICF…LVIL), and 189 to 209 (ILSG…KYWI).

Belongs to the CemA family.

The protein resides in the plastid. Its subcellular location is the chloroplast inner membrane. The enzyme catalyses K(+)(in) + H(+)(out) = K(+)(out) + H(+)(in). Its function is as follows. Contributes to K(+)/H(+) antiport activity by supporting proton efflux to control proton extrusion and homeostasis in chloroplasts in a light-dependent manner to modulate photosynthesis. Prevents excessive induction of non-photochemical quenching (NPQ) under continuous-light conditions. Indirectly promotes efficient inorganic carbon uptake into chloroplasts. The chain is Potassium/proton antiporter CemA from Ipomoea purpurea (Common morning glory).